Reading from the N-terminus, the 442-residue chain is 2-oxoisovalerate dehydrogenase subunit alpha, mitochondrial (442 aa).

The N-terminal 42 residues, 1–42, are a transit peptide targeting the mitochondrion; that stretch reads MSAAKIWRPSRGLRQAALLLLGRSGVRGLARSHPSRQQQQQF. Residues 30 to 50 are disordered; it reads ARSHPSRQQQQQFPSLDDKPQ. Thiamine diphosphate is bound by residues Tyr-155 and Arg-156. Ser-203 lines the K(+) pocket. Residue Ser-204 coordinates thiamine diphosphate. K(+) contacts are provided by Pro-205, Thr-208, and Gln-209. Glu-235 contributes to the Mg(2+) binding site. Residues Gly-236, Ala-237, and Arg-262 each coordinate thiamine diphosphate. Mg(2+) contacts are provided by Asn-264 and Tyr-266. Residue His-333 participates in thiamine diphosphate binding. Phosphoserine; by BCKDK is present on Ser-334. Phosphothreonine is present on Thr-335. Phosphoserine is present on residues Ser-336 and Ser-344. The residue at position 353 (Lys-353) is an N6-acetyllysine; alternate. Lys-353 bears the N6-succinyllysine; alternate mark. The residue at position 377 (Lys-377) is an N6-succinyllysine.

This sequence belongs to the BCKDHA family. As to quaternary structure, heterotetramer of 2 alpha/BCKDHA and 2 beta chains/BCKDHB that forms the branched-chain alpha-keto acid decarboxylase (E1) component of the BCKD complex. The branched-chain alpha-ketoacid dehydrogenase is a large complex composed of three major building blocks E1, E2 and E3. It is organized around E2, a 24-meric cubic core composed of DBT, to which are associated 6 to 12 copies of E1, and approximately 6 copies of the dehydrogenase E3, a DLD dimer. Interacts with PPM1K. Requires thiamine diphosphate as cofactor. It depends on Mg(2+) as a cofactor. In terms of processing, phosphorylated at Ser-334 by BCKDK and dephosphorylated by protein phosphatase PPM1K.

It localises to the mitochondrion matrix. The catalysed reaction is N(6)-[(R)-lipoyl]-L-lysyl-[protein] + 3-methyl-2-oxobutanoate + H(+) = N(6)-[(R)-S(8)-2-methylpropanoyldihydrolipoyl]-L-lysyl-[protein] + CO2. Functionally, together with BCKDHB forms the heterotetrameric E1 subunit of the mitochondrial branched-chain alpha-ketoacid dehydrogenase (BCKD) complex. The BCKD complex catalyzes the multi-step oxidative decarboxylation of alpha-ketoacids derived from the branched-chain amino-acids valine, leucine and isoleucine producing CO2 and acyl-CoA which is subsequently utilized to produce energy. The E1 subunit catalyzes the first step with the decarboxylation of the alpha-ketoacid forming an enzyme-product intermediate. A reductive acylation mediated by the lipoylamide cofactor of E2 extracts the acyl group from the E1 active site for the next step of the reaction. The chain is 2-oxoisovalerate dehydrogenase subunit alpha, mitochondrial from Mus musculus (Mouse).